The chain runs to 132 residues: Holo-[acyl-carrier-protein] synthase (132 aa).

2 residues coordinate Mg(2+): Asp8 and Glu64.

It belongs to the P-Pant transferase superfamily. AcpS family. The cofactor is Mg(2+).

It localises to the cytoplasm. It carries out the reaction apo-[ACP] + CoA = holo-[ACP] + adenosine 3',5'-bisphosphate + H(+). Functionally, transfers the 4'-phosphopantetheine moiety from coenzyme A to a Ser of acyl-carrier-protein. This chain is Holo-[acyl-carrier-protein] synthase, found in Shewanella sediminis (strain HAW-EB3).